A 169-amino-acid polypeptide reads, in one-letter code: UPF0303 protein BOV_1367 (169 aa).

This sequence belongs to the UPF0303 family.

The protein is UPF0303 protein BOV_1367 of Brucella ovis (strain ATCC 25840 / 63/290 / NCTC 10512).